The sequence spans 107 residues: Nucleoid-associated protein HNE_0371 (107 aa).

Belongs to the YbaB/EbfC family. Homodimer.

The protein localises to the cytoplasm. It localises to the nucleoid. In terms of biological role, binds to DNA and alters its conformation. May be involved in regulation of gene expression, nucleoid organization and DNA protection. The polypeptide is Nucleoid-associated protein HNE_0371 (Hyphomonas neptunium (strain ATCC 15444)).